The following is a 622-amino-acid chain: Elongation factor 4 (622 aa).

The region spanning 17 to 201 (ALIRNFCIIA…KVVAEVPAPV (185 aa)) is the tr-type G domain. GTP is bound by residues 29–34 (DHGKST) and 148–151 (NKID).

Belongs to the TRAFAC class translation factor GTPase superfamily. Classic translation factor GTPase family. LepA subfamily.

The protein resides in the cell membrane. It catalyses the reaction GTP + H2O = GDP + phosphate + H(+). Required for accurate and efficient protein synthesis under certain stress conditions. May act as a fidelity factor of the translation reaction, by catalyzing a one-codon backward translocation of tRNAs on improperly translocated ribosomes. Back-translocation proceeds from a post-translocation (POST) complex to a pre-translocation (PRE) complex, thus giving elongation factor G a second chance to translocate the tRNAs correctly. Binds to ribosomes in a GTP-dependent manner. The polypeptide is Elongation factor 4 (Streptomyces coelicolor (strain ATCC BAA-471 / A3(2) / M145)).